The chain runs to 267 residues: Ribosomal RNA small subunit methyltransferase A (267 aa).

Residues Leu20, Gly45, Glu68, Asp91, and Asn113 each coordinate S-adenosyl-L-methionine.

This sequence belongs to the class I-like SAM-binding methyltransferase superfamily. rRNA adenine N(6)-methyltransferase family. RsmA subfamily.

The protein localises to the cytoplasm. The catalysed reaction is adenosine(1518)/adenosine(1519) in 16S rRNA + 4 S-adenosyl-L-methionine = N(6)-dimethyladenosine(1518)/N(6)-dimethyladenosine(1519) in 16S rRNA + 4 S-adenosyl-L-homocysteine + 4 H(+). In terms of biological role, specifically dimethylates two adjacent adenosines (A1518 and A1519) in the loop of a conserved hairpin near the 3'-end of 16S rRNA in the 30S particle. May play a critical role in biogenesis of 30S subunits. This chain is Ribosomal RNA small subunit methyltransferase A, found in Blochmanniella pennsylvanica (strain BPEN).